The following is a 290-amino-acid chain: 33 kDa chaperonin (290 aa).

Intrachain disulfides connect C235-C237 and C268-C271.

Belongs to the HSP33 family. Post-translationally, under oxidizing conditions two disulfide bonds are formed involving the reactive cysteines. Under reducing conditions zinc is bound to the reactive cysteines and the protein is inactive.

It localises to the cytoplasm. In terms of biological role, redox regulated molecular chaperone. Protects both thermally unfolding and oxidatively damaged proteins from irreversible aggregation. Plays an important role in the bacterial defense system toward oxidative stress. The polypeptide is 33 kDa chaperonin (Streptococcus pneumoniae (strain JJA)).